A 190-amino-acid chain; its full sequence is Protein GrpE (190 aa).

A disordered region spans residues 1-40 (MAKEKKEEVKEEEVSEATSTEGSTDVESTNNDDLTTETQA). Polar residues predominate over residues 22-40 (GSTDVESTNNDDLTTETQA).

It belongs to the GrpE family. Homodimer.

The protein localises to the cytoplasm. Functionally, participates actively in the response to hyperosmotic and heat shock by preventing the aggregation of stress-denatured proteins, in association with DnaK and GrpE. It is the nucleotide exchange factor for DnaK and may function as a thermosensor. Unfolded proteins bind initially to DnaJ; upon interaction with the DnaJ-bound protein, DnaK hydrolyzes its bound ATP, resulting in the formation of a stable complex. GrpE releases ADP from DnaK; ATP binding to DnaK triggers the release of the substrate protein, thus completing the reaction cycle. Several rounds of ATP-dependent interactions between DnaJ, DnaK and GrpE are required for fully efficient folding. The polypeptide is Protein GrpE (Pediococcus pentosaceus (strain ATCC 25745 / CCUG 21536 / LMG 10740 / 183-1w)).